Here is a 448-residue protein sequence, read N- to C-terminus: Cytoplasmic tRNA 2-thiolation protein 2 (448 aa).

The protein belongs to the CTU2/NCS2 family.

It is found in the cytoplasm. It functions in the pathway tRNA modification; 5-methoxycarbonylmethyl-2-thiouridine-tRNA biosynthesis. In terms of biological role, plays a central role in 2-thiolation of mcm(5)S(2)U at tRNA wobble positions of tRNA(Lys), tRNA(Glu) and tRNA(Gln). May act by forming a heterodimer with NCS6 that ligates sulfur from thiocarboxylated URM1 onto the uridine of tRNAs at wobble position. Prior mcm(5) tRNA modification by the elongator complex is required for 2-thiolation. May also be involved in protein urmylation. This chain is Cytoplasmic tRNA 2-thiolation protein 2, found in Lodderomyces elongisporus (strain ATCC 11503 / CBS 2605 / JCM 1781 / NBRC 1676 / NRRL YB-4239) (Yeast).